Here is a 62-residue protein sequence, read N- to C-terminus: Photosystem II reaction center protein Z (62 aa).

Helical transmembrane passes span 8 to 28 (AVFALIATSSILLIGVPVVFA) and 41 to 61 (FSGTSLWIGLVFLVGILNSLI).

Belongs to the PsbZ family. As to quaternary structure, PSII is composed of 1 copy each of membrane proteins PsbA, PsbB, PsbC, PsbD, PsbE, PsbF, PsbH, PsbI, PsbJ, PsbK, PsbL, PsbM, PsbT, PsbY, PsbZ, Psb30/Ycf12, at least 3 peripheral proteins of the oxygen-evolving complex and a large number of cofactors. It forms dimeric complexes.

It localises to the plastid. Its subcellular location is the chloroplast thylakoid membrane. Functionally, may control the interaction of photosystem II (PSII) cores with the light-harvesting antenna, regulates electron flow through the 2 photosystem reaction centers. PSII is a light-driven water plastoquinone oxidoreductase, using light energy to abstract electrons from H(2)O, generating a proton gradient subsequently used for ATP formation. The polypeptide is Photosystem II reaction center protein Z (Panax ginseng (Korean ginseng)).